The chain runs to 203 residues: Thymidylate kinase (203 aa).

An ATP-binding site is contributed by 7-14 (GGEGAGKT).

This sequence belongs to the thymidylate kinase family.

It catalyses the reaction dTMP + ATP = dTDP + ADP. Functionally, phosphorylation of dTMP to form dTDP in both de novo and salvage pathways of dTTP synthesis. In Chlamydia muridarum (strain MoPn / Nigg), this protein is Thymidylate kinase (tmk).